Reading from the N-terminus, the 213-residue chain is Large ribosomal subunit protein uL3 (213 aa).

Residues 131–168 are disordered; that stretch reads GPMSHGSKNHRLPGSTGAGTTPGRVYPGKRMAGRSGND.

The protein belongs to the universal ribosomal protein uL3 family. In terms of assembly, part of the 50S ribosomal subunit. Forms a cluster with proteins L14 and L19.

Its function is as follows. One of the primary rRNA binding proteins, it binds directly near the 3'-end of the 23S rRNA, where it nucleates assembly of the 50S subunit. The sequence is that of Large ribosomal subunit protein uL3 from Synechococcus elongatus (strain ATCC 33912 / PCC 7942 / FACHB-805) (Anacystis nidulans R2).